Consider the following 152-residue polypeptide: Protein SprT-like (152 aa).

A SprT-like domain is found at 7–148 (QRLVEEVSLQ…GKCKGKLILI (142 aa)). Histidine 67 is a Zn(2+) binding site. Glutamate 68 is an active-site residue. Histidine 71 contacts Zn(2+).

Belongs to the SprT family. Requires Zn(2+) as cofactor.

Its subcellular location is the cytoplasm. This is Protein SprT-like from Bacillus cereus (strain ATCC 10987 / NRS 248).